The following is a 1148-amino-acid chain: Ice nucleation protein (1148 aa).

Disordered regions lie at residues 110–131 (ADPASTSTSTSTSTLTPMPTAI), 222–256 (YGSTQTSGEDSSLTAGYGSTQTAQEGSNLTAGYGS), and 367–394 (GSTQTSGSDSSLTAGYGSTQTAQEGSNL). The segment covering 114-128 (STSTSTSTSTLTPMP) has biased composition (low complexity). An octapeptide periodicity region spans residues 180–1099 (ATYGSTLSGD…LSAGEDSTLI (920 aa)). A compositionally biased stretch (polar residues) spans 230–250 (EDSSLTAGYGSTQTAQEGSNL).

The protein belongs to the bacterial ice nucleation protein family.

Its subcellular location is the cell outer membrane. Functionally, ice nucleation proteins enable bacteria to nucleate crystallization in supercooled water. This chain is Ice nucleation protein (inaK), found in Pseudomonas syringae.